Consider the following 377-residue polypeptide: Flagellar P-ring protein (377 aa).

Positions 1–30 are cleaved as a signal peptide; it reads MLARFLSSLLKASVTALAVVVAFGFAANFA.

The protein belongs to the FlgI family. As to quaternary structure, the basal body constitutes a major portion of the flagellar organelle and consists of four rings (L,P,S, and M) mounted on a central rod.

The protein localises to the periplasm. Its subcellular location is the bacterial flagellum basal body. Functionally, assembles around the rod to form the L-ring and probably protects the motor/basal body from shearing forces during rotation. This is Flagellar P-ring protein from Cupriavidus pinatubonensis (strain JMP 134 / LMG 1197) (Cupriavidus necator (strain JMP 134)).